The following is an 874-amino-acid chain: Alanine--tRNA ligase (874 aa).

The Zn(2+) site is built by His-559, His-563, Cys-661, and His-665.

It belongs to the class-II aminoacyl-tRNA synthetase family. It depends on Zn(2+) as a cofactor.

It localises to the cytoplasm. It catalyses the reaction tRNA(Ala) + L-alanine + ATP = L-alanyl-tRNA(Ala) + AMP + diphosphate. Its function is as follows. Catalyzes the attachment of alanine to tRNA(Ala) in a two-step reaction: alanine is first activated by ATP to form Ala-AMP and then transferred to the acceptor end of tRNA(Ala). Also edits incorrectly charged Ser-tRNA(Ala) and Gly-tRNA(Ala) via its editing domain. This is Alanine--tRNA ligase from Microcystis aeruginosa (strain NIES-843 / IAM M-2473).